The sequence spans 133 residues: ATP synthase epsilon chain (133 aa).

The protein belongs to the ATPase epsilon chain family. As to quaternary structure, F-type ATPases have 2 components, CF(1) - the catalytic core - and CF(0) - the membrane proton channel. CF(1) has five subunits: alpha(3), beta(3), gamma(1), delta(1), epsilon(1). CF(0) has three main subunits: a, b and c.

It localises to the cell membrane. Functionally, produces ATP from ADP in the presence of a proton gradient across the membrane. The sequence is that of ATP synthase epsilon chain from Clostridium botulinum (strain ATCC 19397 / Type A).